The sequence spans 979 residues: MASTTVAQLAAELSRSPAALLEQLQAAGVGKATPDDVITESDKTRLLDYLKRSHGQSDDSARKKITLTKRETSEIRQSDSTGKTRTVQVEVRKKRVLIKRDDVESHGDGADSQESAEAAAEEVRRDEEQRREQAEALARQEAEAQAAREAAEREEAERRAKQEALEAEQRRQAELLAQKAAEEAAAAQAAADAAEETAREKAEEDKARLATERAQAQKNADDAKAAVDKARAEQDSAKAAADKARAEQDAAARRRREAAEAEARAIQQMLNAPPRVLKAPSERKAEEKKAEQTGTLHKPVKPAGATTEAKKDDKKAAPAATTTTAAAGDKKGAKGGKTGTWQDEGSRGKKGGGLKTRGDSSGGVGGWRSGPRGRGGKHNADDARSNFQAPTEPVVREVHVPETVSVADLAHKMAVKASEVIKQMMKLGQMVTINQVLDQETAMIVVEEMGHKAFAAKLDDPEALLVVDGEDHGDAEMLPRPPVVTVMGHVDHGKTSLLDYIRRTKVAAGEAGGITQHIGAYHVETDRGVITFLDTPGHEAFTAMRARGAKATDIVILVVAADDGVMPQTKEAIAHAKAAGVPIVVAITKVDKPEANPDRVKQELVAEQVVPEEYGGESPFVPVSAKTGQGIDDLLENVLLQAEVLELRAPVDAPAKGLVVEAQLDKGKGPIATILVSSGTLKRGDVVLAGSAYGRVRAMLDENGKPSKEAGPSIPVEIQGLSEVPAAGEEVLVLPDERKAREIALFRQGKFRDVKLAKQQAAKLETMLEQMAEGEVQTLPLIVKADVQGSQEALVQSLQKLSTSEVRVQIVHGGVGGISESDVNLATASKAVIIGFNVRADAGARKLAEHNGIDIRYYNIIYDAVDEIKAAMSGMLAPEKRETTIGQVEVRQVFRVPKVGAVAGCMVTDGLIKRNSMVRVLRNNVVIHDGELDSLKRFKDDVKEVKQGFECGLSIKNFNDVQEGDQLEVYEITEVARTL.

Residues 50 to 77 (LKRSHGQSDDSARKKITLTKRETSEIRQ) show a composition bias toward basic and acidic residues. A disordered region spans residues 50–385 (LKRSHGQSDD…GKHNADDARS (336 aa)). The segment covering 78–87 (SDSTGKTRTV) has biased composition (polar residues). 3 stretches are compositionally biased toward basic and acidic residues: residues 98–109 (IKRDDVESHGDG), 121–142 (EEVRRDEEQRREQAEALARQEA), and 149–173 (EAAEREEAERRAKQEALEAEQRRQA). Over residues 174–192 (ELLAQKAAEEAAAAQAAAD) the composition is skewed to low complexity. 3 stretches are compositionally biased toward basic and acidic residues: residues 196–211 (ETAREKAEEDKARLAT), 219–263 (NADD…EAEA), and 280–291 (PSERKAEEKKAE). Positions 317-327 (APAATTTTAAA) are enriched in low complexity. Gly residues predominate over residues 351-368 (GGGLKTRGDSSGGVGGWR). Residues 479–646 (PRPPVVTVMG…NVLLQAEVLE (168 aa)) form the tr-type G domain. The segment at 488–495 (GHVDHGKT) is G1. 488–495 (GHVDHGKT) provides a ligand contact to GTP. The interval 513 to 517 (GITQH) is G2. The tract at residues 534–537 (DTPG) is G3. Residues 534 to 538 (DTPGH) and 588 to 591 (TKVD) each bind GTP. Positions 588–591 (TKVD) are G4. The G5 stretch occupies residues 624-626 (SAK).

Belongs to the TRAFAC class translation factor GTPase superfamily. Classic translation factor GTPase family. IF-2 subfamily.

It localises to the cytoplasm. Functionally, one of the essential components for the initiation of protein synthesis. Protects formylmethionyl-tRNA from spontaneous hydrolysis and promotes its binding to the 30S ribosomal subunits. Also involved in the hydrolysis of GTP during the formation of the 70S ribosomal complex. The sequence is that of Translation initiation factor IF-2 from Cupriavidus metallidurans (strain ATCC 43123 / DSM 2839 / NBRC 102507 / CH34) (Ralstonia metallidurans).